The following is a 188-amino-acid chain: Segregation and condensation protein B (188 aa).

The protein belongs to the ScpB family. Homodimer. Homodimerization may be required to stabilize the binding of ScpA to the Smc head domains. Component of a cohesin-like complex composed of ScpA, ScpB and the Smc homodimer, in which ScpA and ScpB bind to the head domain of Smc. The presence of the three proteins is required for the association of the complex with DNA.

It is found in the cytoplasm. Functionally, participates in chromosomal partition during cell division. May act via the formation of a condensin-like complex containing Smc and ScpA that pull DNA away from mid-cell into both cell halves. This is Segregation and condensation protein B from Lactococcus lactis subsp. cremoris (strain MG1363).